The primary structure comprises 498 residues: Putative antiporter subunit mnhD2 (498 aa).

The next 14 helical transmembrane spans lie at 2-22 (LSNLLILPMLLPFLCALILVF), 32-52 (YLYLGTMTITTIISLMLLIYV), 78-98 (LSLIMVTTASFVITLIMAYGF), 108-128 (YHLPSFILFLSVGVIGSFLTS), 130-150 (LFNLYVMFEIMLLASFVLITL), 161-181 (IIYVVLNIIGSWLFLLGIGLL), 209-229 (ISLIFLVAFSAKAALVLFMWL), 240-260 (LAALFAALMTKVGAYALIRFF), 271-291 (IHPLLATMAAITMVIGAIGVI), 308-328 (IGFIILGLGTNTFAGINGAIF), 330-350 (LVNDIVVKTLLFFIIGSLVYI), 369-389 (FGVAFIIMIFAIGGVPPFSGF), 406-426 (IGLALMIITSLIAMYSLFRIF), and 451-471 (ILSILVVVVIAIGIAAPVVLN).

Belongs to the CPA3 antiporters (TC 2.A.63) subunit D family. As to quaternary structure, may form a heterooligomeric complex that consists of seven subunits: mnhA2, mnhB2, mnhC2, mnhD2, mnhE2, mnhF2 and mnhG2.

It localises to the cell membrane. The sequence is that of Putative antiporter subunit mnhD2 (mnhD2) from Staphylococcus aureus (strain Mu3 / ATCC 700698).